Here is a 105-residue protein sequence, read N- to C-terminus: ESAT-6-like protein EsxU (105 aa).

It belongs to the WXG100 family. CFP-10 subfamily. As to quaternary structure, forms a tight 1:1 complex with EsxT. Complex formation results in induction of alpha-helical conformation and stability against chemical denaturation.

The protein localises to the secreted. The protein is ESAT-6-like protein EsxU of Mycobacterium tuberculosis (strain ATCC 25618 / H37Rv).